The chain runs to 473 residues: PEP-dependent dihydroxyacetone kinase, phosphoryl donor subunit DhaM (473 aa).

Positions 1 to 137 (MVNLVIVSHS…LAAKQAQLGI (137 aa)) constitute a PTS EIIA type-4 domain. The active-site Tele-phosphohistidine intermediate is the histidine 9. An HPr domain is found at 155 to 242 (ARSVTVTIRN…SLAAEDFGEH (88 aa)). Histidine 169 acts as the Pros-phosphohistidine intermediate in catalysis. A PTS EI-like, N-terminal part region spans residues 266–472 (PLPLAQPARH…IDPAAQRVSC (207 aa)). Histidine 432 (tele-phosphohistidine intermediate) is an active-site residue.

The protein belongs to the PEP-utilizing enzyme family. Homodimer. The dihydroxyacetone kinase complex is composed of a homodimer of DhaM, a homodimer of DhaK and the subunit DhaL.

The enzyme catalyses dihydroxyacetone + phosphoenolpyruvate = dihydroxyacetone phosphate + pyruvate. In terms of biological role, component of the dihydroxyacetone kinase complex, which is responsible for the phosphoenolpyruvate (PEP)-dependent phosphorylation of dihydroxyacetone. DhaM serves as the phosphoryl donor. Is phosphorylated by phosphoenolpyruvate in an EI- and HPr-dependent reaction, and a phosphorelay system on histidine residues finally leads to phosphoryl transfer to DhaL and dihydroxyacetone. This Pantoea ananatis (strain LMG 20103) protein is PEP-dependent dihydroxyacetone kinase, phosphoryl donor subunit DhaM.